Here is a 649-residue protein sequence, read N- to C-terminus: L-ornithine N(5)-monooxygenase (649 aa).

FAD contacts are provided by residues 72–80 and glutamine 91; that span reads EKRGHFAWH. Position 96 (lysine 96) interacts with substrate. Residue valine 157 coordinates FAD. Residues 289-292 and arginine 314 each bind NADP(+); that span reads AGQS. Substrate is bound by residues 328–331 and asparagine 359; that span reads NSAA. 359-361 is an NADP(+) binding site; the sequence is NYS. Positions 512 to 547 are disordered; it reads AMQSDAVRSGKSSPGSGSDASSTSSQQTLASENSTE. Residues 520-536 show a composition bias toward low complexity; it reads SGKSSPGSGSDASSTSS. Residues 537-547 are compositionally biased toward polar residues; the sequence is QQTLASENSTE. 569–571 provides a ligand contact to FAD; sequence SLL. Residue serine 572 participates in substrate binding. The interval 585–611 is disordered; that stretch reads LLQRLPRTRRGTASSAATQPAASTVAS. Positions 596–611 are enriched in low complexity; sequence TASSAATQPAASTVAS.

It belongs to the lysine N(6)-hydroxylase/L-ornithine N(5)-oxygenase family. As to quaternary structure, homotetramer. FAD serves as cofactor.

The catalysed reaction is L-ornithine + NADPH + O2 = N(5)-hydroxy-L-ornithine + NADP(+) + H2O. The enzyme catalyses L-ornithine + NADH + O2 = N(5)-hydroxy-L-ornithine + NAD(+) + H2O. It participates in siderophore biosynthesis; ferrichrome biosynthesis. Functionally, catalyzes the conversion of L-ornithine to N(5)-hydroxyornithine, the first step in the biosynthesis of all hydroxamate-containing siderophores, such as ferrichrome. This is L-ornithine N(5)-monooxygenase (SID1) from Mycosarcoma maydis (Corn smut fungus).